The sequence spans 819 residues: Ribosome-releasing factor 2, mitochondrial (819 aa).

Residues 1 to 30 (MWKWNVRRWAGARVNISKNRLSVINVGSRY) constitute a mitochondrion transit peptide. Positions 39 to 327 (SKVRNIGIIA…AIVNYLPSPI (289 aa)) constitute a tr-type G domain. Residues 48 to 55 (AHIDAGKT), 113 to 117 (DTPGH), and 165 to 168 (NKMD) contribute to the GTP site.

Belongs to the TRAFAC class translation factor GTPase superfamily. Classic translation factor GTPase family. EF-G/EF-2 subfamily.

It localises to the mitochondrion. Mitochondrial GTPase that mediates the disassembly of ribosomes from messenger RNA at the termination of mitochondrial protein biosynthesis. Not involved in the GTP-dependent ribosomal translocation step during translation elongation. The sequence is that of Ribosome-releasing factor 2, mitochondrial from Saccharomyces cerevisiae (strain RM11-1a) (Baker's yeast).